We begin with the raw amino-acid sequence, 154 residues long: 6,7-dimethyl-8-ribityllumazine synthase (154 aa).

5-amino-6-(D-ribitylamino)uracil-binding positions include 22–23 (FN), 56–58 (SWE), and 80–82 (VLI). (2S)-2-hydroxy-3-oxobutyl phosphate is bound at residue 85–86 (AT). The Proton donor role is filled by histidine 88. 5-amino-6-(D-ribitylamino)uracil is bound at residue phenylalanine 113. Arginine 127 is a binding site for (2S)-2-hydroxy-3-oxobutyl phosphate. Lysine 135 is a 5-amino-6-(D-ribitylamino)uracil binding site.

It belongs to the DMRL synthase family. Forms an icosahedral capsid composed of 60 subunits, arranged as a dodecamer of pentamers.

The enzyme catalyses (2S)-2-hydroxy-3-oxobutyl phosphate + 5-amino-6-(D-ribitylamino)uracil = 6,7-dimethyl-8-(1-D-ribityl)lumazine + phosphate + 2 H2O + H(+). It participates in cofactor biosynthesis; riboflavin biosynthesis; riboflavin from 2-hydroxy-3-oxobutyl phosphate and 5-amino-6-(D-ribitylamino)uracil: step 1/2. In terms of biological role, catalyzes the formation of 6,7-dimethyl-8-ribityllumazine by condensation of 5-amino-6-(D-ribitylamino)uracil with 3,4-dihydroxy-2-butanone 4-phosphate. This is the penultimate step in the biosynthesis of riboflavin. The chain is 6,7-dimethyl-8-ribityllumazine synthase (ribH) from Aquifex aeolicus (strain VF5).